Consider the following 303-residue polypeptide: Cobalamin biosynthesis protein CobD (303 aa).

4 helical membrane passes run 65-85 (LLAW…IVLL), 147-167 (DAVF…VVLY), 235-255 (AGPV…GAAI), and 283-303 (LVWA…WLYA).

Belongs to the CobD/CbiB family.

It is found in the cell membrane. It participates in cofactor biosynthesis; adenosylcobalamin biosynthesis. In terms of biological role, converts cobyric acid to cobinamide by the addition of aminopropanol on the F carboxylic group. The protein is Cobalamin biosynthesis protein CobD of Stutzerimonas stutzeri (strain A1501) (Pseudomonas stutzeri).